The chain runs to 473 residues: Photosystem II CP43 reaction center protein (473 aa).

A propeptide spanning residues 1-14 (MKTLYSLRRFYPVE) is cleaved from the precursor. Residue threonine 15 is modified to N-acetylthreonine. Threonine 15 carries the post-translational modification Phosphothreonine. Helical transmembrane passes span 69–93 (LFEVAHFVPEKPMYEQGFILLPHLA), 134–155 (LLGPETLEESFPFFGYVWKDRN), 178–200 (KALSFGGVYDTWAPGGGDVRKIT), 255–275 (KPFAWARRALVWSGEAYLSYS), and 291–312 (WFNNTAYPSEFYGPTGPEASQA). Residue glutamate 367 participates in [CaMn4O5] cluster binding. Residues 447-471 (RARAAAAGFEKGIDRDFEPVLSMTP) traverse the membrane as a helical segment.

Belongs to the PsbB/PsbC family. PsbC subfamily. PSII is composed of 1 copy each of membrane proteins PsbA, PsbB, PsbC, PsbD, PsbE, PsbF, PsbH, PsbI, PsbJ, PsbK, PsbL, PsbM, PsbT, PsbX, PsbY, PsbZ, Psb30/Ycf12, at least 3 peripheral proteins of the oxygen-evolving complex and a large number of cofactors. It forms dimeric complexes. Binds multiple chlorophylls and provides some of the ligands for the Ca-4Mn-5O cluster of the oxygen-evolving complex. It may also provide a ligand for a Cl- that is required for oxygen evolution. PSII binds additional chlorophylls, carotenoids and specific lipids. is required as a cofactor.

It is found in the plastid. The protein localises to the chloroplast thylakoid membrane. In terms of biological role, one of the components of the core complex of photosystem II (PSII). It binds chlorophyll and helps catalyze the primary light-induced photochemical processes of PSII. PSII is a light-driven water:plastoquinone oxidoreductase, using light energy to abstract electrons from H(2)O, generating O(2) and a proton gradient subsequently used for ATP formation. The polypeptide is Photosystem II CP43 reaction center protein (Pelargonium hortorum (Common geranium)).